The chain runs to 131 residues: Arsenate reductase (131 aa).

Catalysis depends on nucleophile residues Cys10, Cys82, and Cys89. Cystine bridges form between Cys10-Cys82 and Cys82-Cys89.

The protein belongs to the low molecular weight phosphotyrosine protein phosphatase family. Thioredoxin-coupled ArsC subfamily.

It localises to the cytoplasm. It catalyses the reaction arsenate + [thioredoxin]-dithiol + H(+) = arsenite + [thioredoxin]-disulfide + H2O. Functionally, catalyzes the reduction of arsenate [As(V)] to arsenite [As(III)]. The protein is Arsenate reductase of Staphylococcus xylosus.